We begin with the raw amino-acid sequence, 231 residues long: Ion-translocating oxidoreductase complex subunit E (231 aa).

6 helical membrane passes run 18 to 38 (ALVQ…ATNA), 39 to 59 (LGLG…ISTL), 63 to 83 (TPAE…VSAV), 86 to 106 (LINA…PLIV), 125 to 145 (ALSA…MFVL), and 182 to 202 (PFLL…MLAG).

This sequence belongs to the NqrDE/RnfAE family. The complex is composed of six subunits: RsxA, RsxB, RsxC, RsxD, RsxE and RsxG.

The protein localises to the cell inner membrane. Its function is as follows. Part of a membrane-bound complex that couples electron transfer with translocation of ions across the membrane. Required to maintain the reduced state of SoxR. This chain is Ion-translocating oxidoreductase complex subunit E, found in Shigella flexneri serotype 5b (strain 8401).